The primary structure comprises 426 residues: D-tagatose-1,6-bisphosphate aldolase subunit KbaZ (426 aa).

The protein belongs to the GatZ/KbaZ family. KbaZ subfamily. In terms of assembly, forms a complex with KbaY.

The protein operates within carbohydrate metabolism; D-tagatose 6-phosphate degradation; D-glyceraldehyde 3-phosphate and glycerone phosphate from D-tagatose 6-phosphate: step 2/2. Component of the tagatose-1,6-bisphosphate aldolase KbaYZ that is required for full activity and stability of the Y subunit. Could have a chaperone-like function for the proper and stable folding of KbaY. When expressed alone, KbaZ does not show any aldolase activity. The chain is D-tagatose-1,6-bisphosphate aldolase subunit KbaZ from Escherichia coli O7:K1 (strain IAI39 / ExPEC).